An 87-amino-acid chain; its full sequence is Small ribosomal subunit protein bS20 (87 aa).

The interval 1 to 26 (MANIKSAQKRAVQSEKRRQHNASQRS) is disordered.

It belongs to the bacterial ribosomal protein bS20 family.

Its function is as follows. Binds directly to 16S ribosomal RNA. The sequence is that of Small ribosomal subunit protein bS20 from Glaesserella parasuis serovar 5 (strain SH0165) (Haemophilus parasuis).